The following is a 37-amino-acid chain: Lambda-hexatoxin-Hv1c (37 aa).

Intrachain disulfides connect cysteine 3–cysteine 17, cysteine 10–cysteine 22, cysteine 13–cysteine 14, and cysteine 16–cysteine 32.

This sequence belongs to the neurotoxin 11 (kappa toxin) family. Expressed by the venom gland.

The protein localises to the secreted. Its function is as follows. This excitatory toxin inhibits insect calcium-activated potassium (KCa) channels (Slo-type). Pan-neuronal expression in Drosophila is lethal but flies engineered to express the toxin only in clock neurons have defects in circadian rhythm but a normal lifespan. The protein is Lambda-hexatoxin-Hv1c of Hadronyche versuta (Blue mountains funnel-web spider).